Consider the following 512-residue polypeptide: NAD(P)H-quinone oxidoreductase subunit 2 B, chloroplastic (512 aa).

A run of 14 helical transmembrane segments spans residues 31-51, 57-77, 99-119, 124-144, 149-169, 183-203, 229-249, 261-281, 295-315, 323-343, 354-374, 395-415, 418-438, and 484-504; these read FIFPECILIFGLILLLMIDLT, IPWLYFISSTSFVMSITALLF, IFQFLILLCSTLCIPLSVEYI, MAITEFLLFILTATLGGMFLC, LITIFVALECFSLCSYLLSGY, YLLMGGASSSILVYGFSWLYG, ISIALIFITVGIGFKLSLAPF, PTPVVAFLSVTSKVAALALAT, WHLLLEILAILSMIFGNLIAI, MLAYSSIGQIGYVIIGIIVGD, YMLFYIAMNLGTFACIILFGL, ALSLALCLLSLGGLPPLAGFF, LYLFWCGWQAGLYFLVSIGLL, and MIVCVIASTILGISMNPIIAI.

It belongs to the complex I subunit 2 family. In terms of assembly, NDH is composed of at least 16 different subunits, 5 of which are encoded in the nucleus.

It localises to the plastid. The protein resides in the chloroplast thylakoid membrane. It catalyses the reaction a plastoquinone + NADH + (n+1) H(+)(in) = a plastoquinol + NAD(+) + n H(+)(out). It carries out the reaction a plastoquinone + NADPH + (n+1) H(+)(in) = a plastoquinol + NADP(+) + n H(+)(out). Functionally, NDH shuttles electrons from NAD(P)H:plastoquinone, via FMN and iron-sulfur (Fe-S) centers, to quinones in the photosynthetic chain and possibly in a chloroplast respiratory chain. The immediate electron acceptor for the enzyme in this species is believed to be plastoquinone. Couples the redox reaction to proton translocation, and thus conserves the redox energy in a proton gradient. The sequence is that of NAD(P)H-quinone oxidoreductase subunit 2 B, chloroplastic from Arabidopsis thaliana (Mouse-ear cress).